Here is a 358-residue protein sequence, read N- to C-terminus: Tripartite motif-containing protein 54 (358 aa).

The segment at 26–82 (CPICLEMFSKPVVILPCQHNLCRKCANDVFQASNPLWQSRGSTTVSSGGRFRCPSCR) adopts an RING-type zinc-finger fold. A B box-type zinc finger spans residues 121–163 (EQHLMCEEHEEEKINIYCLSCEVPTCSLCKVFGAHKDCEVAPL). Residues C126, H129, C149, and H155 each coordinate Zn(2+). Residues 168–211 (KRQKSELSDGIAMLVAGNDRVQAVITQMEEVCQTIEDNSRRQKQ) are mediates microtubule-binding and homooligomerization. Residues 220-258 (LCAVLEERKGELLQALAREQEEKLQRVRGLIRQYGDHLE) are a coiled coil. The COS domain occupies 271–329 (MEEPQMALYLQQAKELINKVGAMSKVELAGRPEPGYESMEQFTVRVEHVAEMLRTIDFQ). The interval 326 to 358 (IDFQPGASGEEEEVAPDGEEGSAGPEEERPDGP) is disordered. The span at 334–345 (GEEEEVAPDGEE) shows a compositional bias: acidic residues.

In terms of assembly, homooligomer and heterooligomer. Interacts with tubulin. Interacts with TRIM63 and probably with TRIM55. As to expression, specifically expressed in heart and skeletal muscle.

The protein localises to the cytoplasm. It localises to the cytoskeleton. The protein resides in the myofibril. Its subcellular location is the sarcomere. It is found in the z line. Functionally, may bind and stabilize microtubules during myotubes formation. The polypeptide is Tripartite motif-containing protein 54 (TRIM54) (Homo sapiens (Human)).